The sequence spans 121 residues: Large ribosomal subunit protein bL12 (121 aa).

It belongs to the bacterial ribosomal protein bL12 family. As to quaternary structure, homodimer. Part of the ribosomal stalk of the 50S ribosomal subunit. Forms a multimeric L10(L12)X complex, where L10 forms an elongated spine to which 2 to 4 L12 dimers bind in a sequential fashion. Binds GTP-bound translation factors.

Its function is as follows. Forms part of the ribosomal stalk which helps the ribosome interact with GTP-bound translation factors. Is thus essential for accurate translation. The chain is Large ribosomal subunit protein bL12 from Xanthomonas euvesicatoria pv. vesicatoria (strain 85-10) (Xanthomonas campestris pv. vesicatoria).